The sequence spans 323 residues: HPr kinase/phosphorylase (323 aa).

Catalysis depends on residues His-142 and Lys-163. ATP is bound at residue 157–164 (GESGVGKS). Ser-164 contacts Mg(2+). Asp-181 acts as the Proton acceptor; for phosphorylation activity. Proton donor; for dephosphorylation activity in catalysis. The interval 205–214 (LEVRGLGMLN) is important for the catalytic mechanism of both phosphorylation and dephosphorylation. Glu-206 is a Mg(2+) binding site. The active site involves Arg-249. The interval 270 to 275 (PVAAGR) is important for the catalytic mechanism of dephosphorylation.

Belongs to the HPrK/P family. In terms of assembly, homohexamer. Mg(2+) is required as a cofactor.

It catalyses the reaction [HPr protein]-L-serine + ATP = [HPr protein]-O-phospho-L-serine + ADP + H(+). The enzyme catalyses [HPr protein]-O-phospho-L-serine + phosphate + H(+) = [HPr protein]-L-serine + diphosphate. Functionally, catalyzes the ATP- as well as the pyrophosphate-dependent phosphorylation of a specific serine residue in HPr, a phosphocarrier protein of the phosphoenolpyruvate-dependent sugar phosphotransferase system (PTS). HprK/P also catalyzes the pyrophosphate-producing, inorganic phosphate-dependent dephosphorylation (phosphorolysis) of seryl-phosphorylated HPr (P-Ser-HPr). The chain is HPr kinase/phosphorylase from Nitrosomonas europaea (strain ATCC 19718 / CIP 103999 / KCTC 2705 / NBRC 14298).